The primary structure comprises 125 residues: Histone H2A (125 aa).

The span at 1–18 (MSGRGKGGKAKGKSKSRS) shows a compositional bias: basic residues. The interval 1 to 23 (MSGRGKGGKAKGKSKSRSSRAGL) is disordered. The residue at position 2 (serine 2) is an N-acetylserine. A Phosphoserine modification is found at serine 2. The residue at position 104 (glutamine 104) is an N5-methylglutamine.

The protein belongs to the histone H2A family. The nucleosome is a histone octamer containing two molecules each of H2A, H2B, H3 and H4 assembled in one H3-H4 heterotetramer and two H2A-H2B heterodimers. The octamer wraps approximately 147 bp of DNA.

It localises to the nucleus. It is found in the chromosome. Its function is as follows. Core component of nucleosome. Nucleosomes wrap and compact DNA into chromatin, limiting DNA accessibility to the cellular machineries which require DNA as a template. Histones thereby play a central role in transcription regulation, DNA repair, DNA replication and chromosomal stability. DNA accessibility is regulated via a complex set of post-translational modifications of histones, also called histone code, and nucleosome remodeling. The polypeptide is Histone H2A (Urechis caupo (Innkeeper worm)).